We begin with the raw amino-acid sequence, 615 residues long: Melanopsin-B (615 aa).

The Extracellular portion of the chain corresponds to 1–19 (MDMDRGFYRKVDVPDHAHY). A helical transmembrane segment spans residues 20 to 40 (VIAFFVLIIGVVGVTGNALVM). At 41–56 (YAFLCNKKLRTPPNYF) the chain is on the cytoplasmic side. Residues 57-77 (IMNLAVSDFLMAITQSPIFFI) traverse the membrane as a helical segment. The Extracellular segment spans residues 78 to 93 (NSLFKEWIFGETGCRM). A disulfide bond links Cys91 and Cys169. A helical membrane pass occupies residues 94–114 (YAFCGALFGITSMINLLAISL). The Cytoplasmic segment spans residues 115 to 136 (DRYIVITKPPQAIRWVSGRRTM). Residues 137–157 (VVILLVWLYSLAWSLAPLLGW) form a helical membrane-spanning segment. Residues 158-189 (SSYIPEGLMTSCTWDYVTSTPANKGYTLMLCC) are Extracellular-facing. Residues 190–210 (FVFFIPLGIISYCYLCMFLAI) form a helical membrane-spanning segment. The Cytoplasmic portion of the chain corresponds to 211 to 244 (RSAGREIERLGTQVRKSTLMQQQTIKTEWKLTKV). A helical transmembrane segment spans residues 245-265 (AFVVIIVYVHSWSPYACVTLI). At 266–279 (AWAGYGSHLSPYSK) the chain is on the extracellular side. A helical transmembrane segment spans residues 280–300 (AVPAVIAKASAIYNPFIYAII). Lys287 carries the post-translational modification N6-(retinylidene)lysine. Residues 301-615 (HSKYRDTLAE…RNLEESFMAL (315 aa)) lie on the Cytoplasmic side of the membrane. 2 disordered regions span residues 390–420 (LGRS…TVAD) and 465–502 (NKHP…QNHP). Residues 401-415 (AQQNRQTRSSDTLEQ) show a composition bias toward polar residues. Positions 469-478 (NNNHKNHNNR) are enriched in basic residues.

The protein belongs to the G-protein coupled receptor 1 family. Opsin subfamily. Expressed in the inner nuclear layer of the retina, possibly in amacrine and ganglion cells. Expressed in a subpopulation of neurons in the dorsal habenula.

The protein localises to the cell membrane. Functionally, photoreceptor implicated in non-image-forming responses to light. The chain is Melanopsin-B (opn4b) from Gadus morhua (Atlantic cod).